Consider the following 290-residue polypeptide: Glycine--tRNA ligase alpha subunit (290 aa).

Belongs to the class-II aminoacyl-tRNA synthetase family. In terms of assembly, tetramer of two alpha and two beta subunits.

The protein localises to the cytoplasm. It catalyses the reaction tRNA(Gly) + glycine + ATP = glycyl-tRNA(Gly) + AMP + diphosphate. This Zymomonas mobilis subsp. mobilis (strain ATCC 31821 / ZM4 / CP4) protein is Glycine--tRNA ligase alpha subunit.